Here is a 359-residue protein sequence, read N- to C-terminus: MLERLEFIESKYDELSVKISDPSVMANQSEWQKLCKEHSEVENIVLKYREYKKAKEDLEADKEMLRDKIDAELKEMVEEEIKELEKSVVDYEEELRVMLLPKDPNDSKNVFVEIRGGTGGEEAALFAADLFRMYTRYAERQGWHTEVMSANETDIGGFKEIVFMVKGNGAYSRMKYESGTHRVQRVPNTESSGRIHTSAATVAVLPEVDDVDIEINPNDIRIDVFRASGHGGQCVNTTDSAVRITHLPTGIVVSCQDEKRQLKNKEKAMKVLRARLYEKAEAERNAGIAENRRNQVGSGDRSERIRTYNFPQGRITDHRIGLTIYKLEQFLDGDIDEVINGLITAEQAEKMKEMGNTKD.

Gln-233 is subject to N5-methylglutamine.

Belongs to the prokaryotic/mitochondrial release factor family. Methylated by PrmC. Methylation increases the termination efficiency of RF1.

It is found in the cytoplasm. Peptide chain release factor 1 directs the termination of translation in response to the peptide chain termination codons UAG and UAA. The chain is Peptide chain release factor 1 from Clostridium acetobutylicum (strain ATCC 824 / DSM 792 / JCM 1419 / IAM 19013 / LMG 5710 / NBRC 13948 / NRRL B-527 / VKM B-1787 / 2291 / W).